The sequence spans 535 residues: UDP-glucuronosyltransferase 1A1 (535 aa).

A signal peptide spans 1 to 29; sequence MSVVCRSSCSLLLLPCLLLCVLGPSASHA. 3 N-linked (GlcNAc...) asparagine glycosylation sites follow: Asn89, Asn297, and Asn435. A helical membrane pass occupies residues 493-509; that stretch reads VIGFLLAIVLTVVFIVY.

Belongs to the UDP-glycosyltransferase family. As to quaternary structure, homodimers. Homooligomer. Interacts with UGT1A3, UGT1A4, UGT1A6, UGT1A7, UGT1A8, UGT1A9 and UGT1A10 to form heterodimers.

It localises to the endoplasmic reticulum membrane. The catalysed reaction is glucuronate acceptor + UDP-alpha-D-glucuronate = acceptor beta-D-glucuronoside + UDP + H(+). It carries out the reaction 17beta-estradiol + UDP-alpha-D-glucuronate = 17beta-estradiol 3-O-(beta-D-glucuronate) + UDP + H(+). The enzyme catalyses 2-hydroxyestrone + UDP-alpha-D-glucuronate = 2-hydroxyestrone 3-O-(beta-D-glucuronate) + UDP + H(+). It catalyses the reaction 2-hydroxy-17beta-estradiol + UDP-alpha-D-glucuronate = 2-hydroxy-17beta-estradiol 3-O-(beta-D-glucuronate) + UDP + H(+). The catalysed reaction is 2-methoxy-17beta-estradiol + UDP-alpha-D-glucuronate = 2-methoxy-17beta-estradiol 3-O-(beta-D-glucuronate) + UDP + H(+). It carries out the reaction 17alpha-estradiol + UDP-alpha-D-glucuronate = 17alpha-estradiol 3-O-(beta-D-glucuronate) + UDP + H(+). The enzyme catalyses 16beta,17beta-estriol + UDP-alpha-D-glucuronate = 16beta,17beta-estriol 16-O-(beta-D-glucuronate) + UDP + H(+). It catalyses the reaction losartan + UDP-alpha-D-glucuronate = losartan-2-N-beta-D-glucuronide + UDP. The catalysed reaction is prunetin + UDP-alpha-D-glucuronate = prunetin-4'-O-beta-D-glucuronide + UDP. It carries out the reaction SN-38 + UDP-alpha-D-glucuronate = SN-38 O-beta-D-glucuronide + UDP + H(+). The enzyme catalyses (4Z,15Z)-bilirubin IXalpha + UDP-alpha-D-glucuronate = (4Z,15Z)-bilirubin IXalpha C12-beta-D-glucuronoside + UDP. It catalyses the reaction (4Z,15Z)-bilirubin IXalpha + UDP-alpha-D-glucuronate = (4Z,15Z)-bilirubin IXalpha C8-beta-D-glucuronoside + UDP. The catalysed reaction is (4Z,15Z)-bilirubin IXalpha C8-beta-D-glucuronoside + UDP-alpha-D-glucuronate = (4Z,15Z)-bilirubin IXalpha C8,C12-beta-D-bisglucuronoside + UDP. It carries out the reaction (4Z,15Z)-bilirubin IXalpha C12-beta-D-glucuronoside + UDP-alpha-D-glucuronate = (4Z,15Z)-bilirubin IXalpha C8,C12-beta-D-bisglucuronoside + UDP. The enzyme catalyses 8-iso-prostaglandin F2alpha + UDP-alpha-D-glucuronate = 8-iso-prostaglandin F2alpha-glucuronide + UDP + H(+). It catalyses the reaction (5Z,8Z,11Z,14Z)-eicosatetraenoate + UDP-alpha-D-glucuronate = O-[(5Z),(8Z),(11Z),(14Z)-eicosatetraenoyl]-beta-D-glucuronate + UDP. The catalysed reaction is 15-hydroxy-(5Z,8Z,11Z,13E)-eicosatetraenoate + UDP-alpha-D-glucuronate = 15-O-(beta-D-glucuronosyl)-(5Z,8Z,11Z,14Z)-eicosatetraenoate + UDP + H(+). It carries out the reaction 20-hydroxy-(5Z,8Z,11Z,14Z)-eicosatetraenoate + UDP-alpha-D-glucuronate = 20-O-(beta-D-glucuronosyl)-(5Z,8Z,11Z,14Z)-eicosatetraenoate + UDP + H(+). The enzyme catalyses prostaglandin B1 + UDP-alpha-D-glucuronate = 15-O-(beta-D-glucuronosyl)-prostaglandin B1 + UDP + H(+). It catalyses the reaction (E)-ferulate + UDP-alpha-D-glucuronate = (E)-4-O-(beta-D-glucuronosyl)-ferulate + UDP + H(+). The catalysed reaction is (E)-ferulate + UDP-alpha-D-glucuronate = (E)-ferulic acid beta-D-glucuronate ester + UDP. Functionally, UDP-glucuronosyltransferase (UGT) that catalyzes phase II biotransformation reactions in which lipophilic substrates are conjugated with glucuronic acid to increase the metabolite's water solubility, thereby facilitating excretion into either the urine or bile. Essential for the elimination and detoxification of drugs, xenobiotics and endogenous compounds. Catalyzes the glucuronidation of endogenous estrogen hormones such as estradiol, estrone and estriol. Involved in the glucuronidation of bilirubin, a degradation product occurring in the normal catabolic pathway that breaks down heme in vertebrates. Involved in the glucuronidation of arachidonic acid (AA) and AA-derived eicosanoids including 15-HETE, 20-HETE, PGB1 and F2-isoprostane (8-iso-PGF2alpha). Involved in the glucuronidation of the phytochemical ferulic acid at the phenolic or the carboxylic acid group. Also catalyzes the glucuronidation the isoflavones genistein, daidzein, glycitein, formononetin, biochanin A and prunetin, which are phytoestrogens with anticancer and cardiovascular properties. Involved in the glucuronidation of the AGTR1 angiotensin receptor antagonist losartan, a drug which can inhibit the effect of angiotensin II. Involved in the biotransformation of 7-ethyl-10-hydroxycamptothecin (SN-38), the pharmacologically active metabolite of the anticancer drug irinotecan. In Rattus norvegicus (Rat), this protein is UDP-glucuronosyltransferase 1A1.